Reading from the N-terminus, the 922-residue chain is Translation initiation factor IF-2 (922 aa).

A disordered region spans residues 243-329 (AAREAAKLAE…GKSKSGQEET (87 aa)). Residues 250–264 (LAEAQKAAAPAPAAP) show a composition bias toward low complexity. Over residues 267–298 (KTLHKPDKPAAAKGAKGPDKKPAGAWKDDAAR) the composition is skewed to basic and acidic residues. Positions 422-589 (ARPPVVTVMG…AILLQAEVLE (168 aa)) constitute a tr-type G domain. Residues 431–438 (GHVDHGKT) are G1. 431 to 438 (GHVDHGKT) contributes to the GTP binding site. The tract at residues 456-460 (GITQH) is G2. The G3 stretch occupies residues 477–480 (DTPG). GTP is bound by residues 477–481 (DTPGH) and 531–534 (NKID). The interval 531–534 (NKID) is G4. The G5 stretch occupies residues 567-569 (SAK).

This sequence belongs to the TRAFAC class translation factor GTPase superfamily. Classic translation factor GTPase family. IF-2 subfamily.

Its subcellular location is the cytoplasm. Its function is as follows. One of the essential components for the initiation of protein synthesis. Protects formylmethionyl-tRNA from spontaneous hydrolysis and promotes its binding to the 30S ribosomal subunits. Also involved in the hydrolysis of GTP during the formation of the 70S ribosomal complex. This chain is Translation initiation factor IF-2, found in Thiobacillus denitrificans (strain ATCC 25259 / T1).